Reading from the N-terminus, the 445-residue chain is Questin oxidase (445 aa).

Belongs to the questin oxidase family. Requires NADPH as cofactor. As to expression, specifically expressed in conidia.

The protein operates within secondary metabolite biosynthesis. Its function is as follows. Questin oxidase; part of the gene cluster that mediates the biosynthesis of trypacidin, a mycotoxin with antiprotozoal activity and that plays a role in the infection process. The pathway begins with the synthesis of atrochrysone thioester by the polyketide synthase (PKS) tpcC. The atrochrysone carboxyl ACP thioesterase tpcB then breaks the thioester bond and releases the atrochrysone carboxylic acid from tpcC. The decarboxylase tpcK converts atrochrysone carboxylic acid to atrochrysone which is further reduced into emodin anthrone. The next step is performed by the emodin anthrone oxygenase tpcL that catalyzes the oxidation of emodinanthrone to emodin. Emodin O-methyltransferase encoded by tpcA catalyzes methylation of the 8-hydroxy group of emodin to form questin. Ring cleavage of questin by questin oxidase tpcI leads to desmethylsulochrin via several intermediates including questin epoxide. Another methylation step catalyzed by tpcM leads to the formation of sulochrin which is further converted to monomethylsulfochrin by tpcH. Finally, the tpcJ catalyzes the conversion of monomethylsulfochrin to trypacidin. Trypacidin is toxic for human pulmonary and bronchial epithelial cells by initiating the intracellular formation of nitric oxide (NO) and hydrogen peroxide (H(2)O(2)), thus triggering host necrotic cell death. The trypacidin pathway is also able to produce endocrocin via a distinct route from the endocrocin Enc pathway. In Aspergillus fumigatus (strain ATCC MYA-4609 / CBS 101355 / FGSC A1100 / Af293) (Neosartorya fumigata), this protein is Questin oxidase.